The following is a 109-amino-acid chain: Large ribosomal subunit protein uL22 (109 aa).

It belongs to the universal ribosomal protein uL22 family. In terms of assembly, part of the 50S ribosomal subunit.

This protein binds specifically to 23S rRNA; its binding is stimulated by other ribosomal proteins, e.g. L4, L17, and L20. It is important during the early stages of 50S assembly. It makes multiple contacts with different domains of the 23S rRNA in the assembled 50S subunit and ribosome. In terms of biological role, the globular domain of the protein is located near the polypeptide exit tunnel on the outside of the subunit, while an extended beta-hairpin is found that lines the wall of the exit tunnel in the center of the 70S ribosome. In Paraburkholderia phymatum (strain DSM 17167 / CIP 108236 / LMG 21445 / STM815) (Burkholderia phymatum), this protein is Large ribosomal subunit protein uL22.